A 227-amino-acid polypeptide reads, in one-letter code: Putative methylase YubD (227 aa).

It belongs to the N(4)/N(6)-methyltransferase family.

A putative beta subtype methylase whose recognition site is unknown. The chain is Putative methylase YubD (yubD) from Escherichia coli (strain K12).